The sequence spans 144 residues: MKTFSAKPHEVRHEWFVVDATDKVLGRLAAAIAHRLRGKHKPIYTPHVDTGDYIVVINADKLRVTGNKAEDKKYYRHSGYPGGIYETTFKKMHERFPTRPLEKAVKGMLPKGPLGYAMIKKLKIYAGDTHPHAAQQPQPLEINA.

It belongs to the universal ribosomal protein uL13 family. As to quaternary structure, part of the 50S ribosomal subunit.

Functionally, this protein is one of the early assembly proteins of the 50S ribosomal subunit, although it is not seen to bind rRNA by itself. It is important during the early stages of 50S assembly. The polypeptide is Large ribosomal subunit protein uL13 (Nitrosomonas europaea (strain ATCC 19718 / CIP 103999 / KCTC 2705 / NBRC 14298)).